Here is a 148-residue protein sequence, read N- to C-terminus: Cysteine-rich venom protein VAR6 (148 aa).

Residues 1–22 (MILLKLYLTLAAILCQSRGTTS) form the signal peptide. Residues 41 to 140 (NKHNDLRRTV…AGVMVGHYTQ (100 aa)) enclose the SCP domain.

The protein belongs to the CRISP family. Contains 8 disulfide bonds. As to expression, expressed by the venom gland.

Its subcellular location is the secreted. In terms of biological role, blocks ryanodine receptors, and potassium channels. The sequence is that of Cysteine-rich venom protein VAR6 from Varanus acanthurus (Ridge-tailed monitor).